The sequence spans 239 residues: Heptaprenylglyceryl phosphate synthase (239 aa).

Lys-12 serves as a coordination point for sn-glycerol 1-phosphate. Mg(2+) is bound by residues Asp-14 and Thr-40. Sn-glycerol 1-phosphate-binding positions include 159–164, Gly-189, and 209–210; these read YLEYSG and GN.

This sequence belongs to the GGGP/HepGP synthase family. Group I subfamily. In terms of assembly, homodimer. Mg(2+) is required as a cofactor.

The catalysed reaction is sn-glycerol 1-phosphate + all-trans-heptaprenyl diphosphate = 3-heptaprenyl-sn-glycero-1-phosphate + diphosphate. The protein operates within membrane lipid metabolism; glycerophospholipid metabolism. Its function is as follows. Prenyltransferase that catalyzes in vivo the transfer of the heptaprenyl moiety of heptaprenyl pyrophosphate (HepPP; 35 carbon atoms) to the C3 hydroxyl of sn-glycerol-1-phosphate (G1P), producing heptaprenylglyceryl phosphate (HepGP). This reaction is an ether-bond-formation step in the biosynthesis of archaea-type G1P-based membrane lipids found in Bacillales. The sequence is that of Heptaprenylglyceryl phosphate synthase from Geobacillus thermodenitrificans (strain NG80-2).